The primary structure comprises 137 residues: Integration host factor subunit beta (137 aa).

Residues 75-92 (KRVPHFKAGKELRERVDR) show a composition bias toward basic and acidic residues. The segment at 75–137 (KRVPHFKAGK…EGGGLNLARS (63 aa)) is disordered. The span at 128 to 137 (EGGGLNLARS) shows a compositional bias: gly residues.

Belongs to the bacterial histone-like protein family. Heterodimer of an alpha and a beta chain.

In terms of biological role, this protein is one of the two subunits of integration host factor, a specific DNA-binding protein that functions in genetic recombination as well as in transcriptional and translational control. The chain is Integration host factor subunit beta from Cupriavidus pinatubonensis (strain JMP 134 / LMG 1197) (Cupriavidus necator (strain JMP 134)).